The sequence spans 133 residues: Small ribosomal subunit protein eS24y (133 aa).

Positions 104–133 are disordered; the sequence is KSRKQIKERKNRAKKIRGVKKTKAGDTKKK. A compositionally biased stretch (basic residues) spans 109–125; it reads IKERKNRAKKIRGVKKT.

It belongs to the eukaryotic ribosomal protein eS24 family.

In Arabidopsis thaliana (Mouse-ear cress), this protein is Small ribosomal subunit protein eS24y (RPS24B).